An 87-amino-acid polypeptide reads, in one-letter code: MGKGRKPTDSETLAHIRDLVAEEKALRAQLRHGGISESEEQQQLRRIEIELDQCWDLLRQRRALRQTGGDPREAVVRPADQVEGYTG.

The interval 67-87 (TGGDPREAVVRPADQVEGYTG) is disordered.

This is an uncharacterized protein from Mycobacterium bovis (strain ATCC BAA-935 / AF2122/97).